A 290-amino-acid chain; its full sequence is Signal recognition particle receptor subunit beta (290 aa).

Residues 44–64 traverse the membrane as a helical segment; the sequence is VLLLALFTLIFIIIISKLFGS. Residues 92 to 100, 114 to 117, Gly-140, and Ala-268 each bind GTP; these read GLSNAGKTA and THTS.

This sequence belongs to the SRP receptor beta subunit family. In terms of assembly, heterodimer of an alpha and a beta chain.

It is found in the endoplasmic reticulum membrane. Its function is as follows. Component of the signal recognition particle (SRP) complex receptor (SR). Ensures, in conjunction with the SRP complex, the correct targeting of the nascent secretory proteins to the endoplasmic reticulum membrane system. May mediate the membrane association of SR. This Dictyostelium discoideum (Social amoeba) protein is Signal recognition particle receptor subunit beta (srprb).